The sequence spans 562 residues: 3-(3-hydroxy-phenyl)propionate/3-hydroxycinnamic acid hydroxylase (562 aa).

FAD contacts are provided by residues 8–37 (DVVIVGAGPVGLTLANILGGQGVRTLIIEE) and 275–285 (FRKGRMLLAGD).

It belongs to the PheA/TfdB FAD monooxygenase family. FAD is required as a cofactor.

The catalysed reaction is 3-(3-hydroxyphenyl)propanoate + NADH + O2 + H(+) = 3-(2,3-dihydroxyphenyl)propanoate + NAD(+) + H2O. It catalyses the reaction (2E)-3-(3-hydroxyphenyl)prop-2-enoate + NADH + O2 + H(+) = (2E)-3-(2,3-dihydroxyphenyl)prop-2-enoate + NAD(+) + H2O. Its pathway is aromatic compound metabolism; 3-phenylpropanoate degradation. Catalyzes the insertion of one atom of molecular oxygen into position 2 of the phenyl ring of 3-(3-hydroxyphenyl)propionate (3-HPP) and hydroxycinnamic acid (3HCI). The protein is 3-(3-hydroxy-phenyl)propionate/3-hydroxycinnamic acid hydroxylase of Mycolicibacterium smegmatis (strain ATCC 700084 / mc(2)155) (Mycobacterium smegmatis).